A 530-amino-acid polypeptide reads, in one-letter code: Phosphoenolpyruvate carboxykinase (ATP) (530 aa).

Substrate is bound by residues arginine 57, tyrosine 193, and lysine 199. ATP-binding positions include lysine 199, histidine 218, and 234 to 242; that span reads GLSGTGKTT. Residues lysine 199 and histidine 218 each coordinate Mn(2+). Aspartate 255 is a binding site for Mn(2+). ATP-binding residues include glutamate 283, arginine 320, and threonine 445. Arginine 320 is a binding site for substrate.

It belongs to the phosphoenolpyruvate carboxykinase (ATP) family. Requires Mn(2+) as cofactor.

It is found in the cytoplasm. It catalyses the reaction oxaloacetate + ATP = phosphoenolpyruvate + ADP + CO2. It participates in carbohydrate biosynthesis; gluconeogenesis. Functionally, involved in the gluconeogenesis. Catalyzes the conversion of oxaloacetate (OAA) to phosphoenolpyruvate (PEP) through direct phosphoryl transfer between the nucleoside triphosphate and OAA. The sequence is that of Phosphoenolpyruvate carboxykinase (ATP) from Leptospira interrogans serogroup Icterohaemorrhagiae serovar copenhageni (strain Fiocruz L1-130).